The primary structure comprises 609 residues: Albumin (609 aa).

Residues 1–18 (MKWVTFISLLFLFSSAYS) form the signal peptide. A propeptide spanning residues 19–24 (RGVFRR) is cleaved from the precursor. Albumin domains follow at residues 19 to 210 (RGVF…DELR), 211 to 403 (DEGK…EFKP), and 404 to 601 (LVEE…KLVA). Residue His27 participates in Cu cation binding. Position 29 is a phosphoserine; by FAM20C (Ser29). Residue Glu30 participates in Ca(2+) binding. The N-linked (Glc) (glycation) lysine glycan is linked to Lys36. Position 37 (Asp37) interacts with Ca(2+). A glycan (N-linked (Glc) (glycation) lysine; in vitro) is linked at Lys75. Residues Cys77 and Cys86 are joined by a disulfide bond. Phosphoserine; by FAM20C is present on residues Ser82 and Ser89. His91 serves as a coordination point for Zn(2+). 4 disulfide bridges follow: Cys99–Cys115, Cys114–Cys125, Cys148–Cys193, and Cys192–Cys201. Thr107 is modified (phosphothreonine; by FAM20C). N-linked (Glc) (glycation) lysine; in vitro glycosylation is found at Lys161 and Lys186. N-linked (Glc) (glycation) lysine; in vitro glycosylation is present at Lys223. Disulfide bonds link Cys224–Cys270 and Cys269–Cys277. N6-succinyllysine is present on Lys229. Residue Lys249 is glycosylated (N-linked (Glc) (glycation) lysine; in vitro). Lys257 is a glycosylation site (N-linked (Glc) (glycation) lysine). Lys264 contacts (4Z,15Z)-bilirubin IXalpha. Glu268 contacts Ca(2+). Residues His271 and Asp273 each contribute to the Zn(2+) site. Ca(2+)-binding residues include Asp273, Glu276, Asp279, and Asp283. Cystine bridges form between Cys289–Cys303 and Cys302–Cys313. Ser297 carries the post-translational modification Phosphoserine. N-linked (Glc) (glycation) lysine; in vitro glycosylation is present at Lys300. A glycan (N-linked (Glc) (glycation) lysine) is linked at Lys305. Lys337 is a glycosylation site (N-linked (Glc) (glycation) lysine; in vitro). 2 disulfides stabilise this stretch: Cys340-Cys385 and Cys384-Cys393. Lys341 carries an N-linked (Glc) (glycation) lysine glycan. An N-linked (GlcNAc...) asparagine; in variant Redhill glycan is attached at Asn342. The N-linked (Glc) (glycation) lysine; in vitro glycan is linked to Lys347. A glycan (N-linked (Glc) (glycation) lysine) is linked at Lys375. Residues Lys402 and Lys437 are each glycosylated (N-linked (Glc) (glycation) lysine; in vitro). 4 cysteine pairs are disulfide-bonded: Cys416–Cys462, Cys461–Cys472, Cys485–Cys501, and Cys500–Cys511. Ser443 is modified (phosphoserine). Phosphothreonine is present on residues Thr444 and Thr446. An N6-succinyllysine modification is found at Lys460. Lys463 carries N-linked (Glc) (glycation) lysine glycosylation. Lys468 carries an N-linked (Glc) (glycation) lysine; in vitro glycan. Ser513 carries the phosphoserine modification. N-linked (GlcNAc...) asparagine; in variant Casebrook glycosylation occurs at Asp518. Intrachain disulfides connect Cys538–Cys583 and Cys582–Cys591. Lys543 bears the N6-succinyllysine mark. An N-linked (Glc) (glycation) lysine glycan is attached at Lys549. Lys558 carries the N6-methyllysine; alternate modification. Lys558 carries an N-linked (Glc) (glycation) lysine; alternate glycan. Lys560 and Lys569 each carry an N-linked (Glc) (glycation) lysine; in vitro glycan. The residue at position 588 (Lys588) is an N6-succinyllysine. Lys597 carries N-linked (Glc) (glycation) lysine; in vitro glycosylation.

It belongs to the ALB/AFP/VDB family. Interacts with FCGRT; this interaction regulates ALB homeostasis. Interacts with TASOR. In plasma, occurs in a covalently-linked complex with chromophore-bound alpha-1-microglobulin with molar ratio 1:2 and 1:1; this interaction does not prevent fatty acid binding to ALB. Post-translationally, kenitra variant is partially O-glycosylated at Thr-620. It has two new disulfide bonds Cys-600 to Cys-602 and Cys-601 to Cys-606. In terms of processing, glycated in diabetic patients. Phosphorylated by FAM20C in the extracellular medium. Post-translationally, acetylated on Lys-223 by acetylsalicylic acid. As to expression, plasma.

It is found in the secreted. Functionally, binds water, Ca(2+), Na(+), K(+), fatty acids, hormones, bilirubin and drugs. Its main function is the regulation of the colloidal osmotic pressure of blood. Major zinc transporter in plasma, typically binds about 80% of all plasma zinc. Major calcium and magnesium transporter in plasma, binds approximately 45% of circulating calcium and magnesium in plasma. Potentially has more than two calcium-binding sites and might additionally bind calcium in a non-specific manner. The shared binding site between zinc and calcium at residue Asp-273 suggests a crosstalk between zinc and calcium transport in the blood. The rank order of affinity is zinc &gt; calcium &gt; magnesium. Binds to the bacterial siderophore enterobactin and inhibits enterobactin-mediated iron uptake of E.coli from ferric transferrin, and may thereby limit the utilization of iron and growth of enteric bacteria such as E.coli. Does not prevent iron uptake by the bacterial siderophore aerobactin. This is Albumin (ALB) from Homo sapiens (Human).